The primary structure comprises 185 residues: Ribosome-recycling factor (185 aa).

Belongs to the RRF family.

It localises to the cytoplasm. Its function is as follows. Responsible for the release of ribosomes from messenger RNA at the termination of protein biosynthesis. May increase the efficiency of translation by recycling ribosomes from one round of translation to another. The polypeptide is Ribosome-recycling factor (Oceanobacillus iheyensis (strain DSM 14371 / CIP 107618 / JCM 11309 / KCTC 3954 / HTE831)).